The chain runs to 878 residues: Alanine--tRNA ligase (878 aa).

Zn(2+) contacts are provided by H565, H569, C667, and H671.

The protein belongs to the class-II aminoacyl-tRNA synthetase family. Requires Zn(2+) as cofactor.

It is found in the cytoplasm. It carries out the reaction tRNA(Ala) + L-alanine + ATP = L-alanyl-tRNA(Ala) + AMP + diphosphate. Its function is as follows. Catalyzes the attachment of alanine to tRNA(Ala) in a two-step reaction: alanine is first activated by ATP to form Ala-AMP and then transferred to the acceptor end of tRNA(Ala). Also edits incorrectly charged Ser-tRNA(Ala) and Gly-tRNA(Ala) via its editing domain. The sequence is that of Alanine--tRNA ligase from Desulforamulus reducens (strain ATCC BAA-1160 / DSM 100696 / MI-1) (Desulfotomaculum reducens).